The following is a 243-amino-acid chain: UPF0246 protein SAG2081 (243 aa).

Belongs to the UPF0246 family.

This chain is UPF0246 protein SAG2081, found in Streptococcus agalactiae serotype V (strain ATCC BAA-611 / 2603 V/R).